The chain runs to 231 residues: Octanoyltransferase (231 aa).

Residues 49 to 231 enclose the BPL/LPL catalytic domain; that stretch reads SEAAEQVWLL…KRTFSEVFGS (183 aa). Substrate is bound by residues 87-94, 162-164, and 175-177; these read RGGQITYH, AIG, and GVS. Cys193 acts as the Acyl-thioester intermediate in catalysis.

This sequence belongs to the LipB family.

The protein resides in the cytoplasm. It carries out the reaction octanoyl-[ACP] + L-lysyl-[protein] = N(6)-octanoyl-L-lysyl-[protein] + holo-[ACP] + H(+). The protein operates within protein modification; protein lipoylation via endogenous pathway; protein N(6)-(lipoyl)lysine from octanoyl-[acyl-carrier-protein]: step 1/2. Its function is as follows. Catalyzes the transfer of endogenously produced octanoic acid from octanoyl-acyl-carrier-protein onto the lipoyl domains of lipoate-dependent enzymes. Lipoyl-ACP can also act as a substrate although octanoyl-ACP is likely to be the physiological substrate. The chain is Octanoyltransferase from Nitrobacter winogradskyi (strain ATCC 25391 / DSM 10237 / CIP 104748 / NCIMB 11846 / Nb-255).